The sequence spans 347 residues: Heat-inducible transcription repressor HrcA (347 aa).

The protein belongs to the HrcA family.

Its function is as follows. Negative regulator of class I heat shock genes (grpE-dnaK-dnaJ and groELS operons). Prevents heat-shock induction of these operons. This chain is Heat-inducible transcription repressor HrcA, found in Enterococcus faecalis (strain ATCC 700802 / V583).